A 729-amino-acid polypeptide reads, in one-letter code: MKITKKPSKVQQFYDQLARAAFADPFSFLGPYIPAEQGALRVWMPGADNVALVVEGQARVALEREGEGGFVLKDGRNLRFTHYQLAVDWAGTEQLLDDPYQYHGLYAEYEDLHTPKQMYHHMGAQFVTLERDGKMVSGVRFLVYAPHAAACSLIGAFNHWDGRRHPMQRLDYGIWGIFIPGLPEGTQYKFELKGPHGEGLPHKADPWGFYAEQYPSFASVTYDHRRYQWQDTAWQQRPVTEKRKQALSFYELHVGSWKRGENGEFLNYRELADQLVPYLVEMGYTHVELMPVAEHPFYGSWGYQPVGLFAPTSRYGSPDDFKYFVDLCHQAGIGVVLDWVPAHFPSDSHGLANFDGTPLFHDPDPRRGWHQDWNSYIYDLGREHVRRFLVANALYWFEMFHIDGIRVDAVASMLYLDYSRSHDQWIPNVDGGRENYDAIATFKWMNEEVYKHFPNAMTIAEESTAFPGVSAPTFMGGLGFGFKWNMGWMHDSLSYIKEDPVHRKYHHNTLTFPLIYAFSENYVLSLSHDEVVYGKRSLMYKMPGDEWQQTANLRAYLGYMYGQPGKKLNFMGTELGQTAEWDHDGQLQWFLTQFERHAGIQRLVRDLNHLYQAQTALHQLDCDPRGFEWRLQDNADLSVIAHERMDEAGNRVLVITNFTPVPQQEFRLGVPKTGKYRLLLNTDAKQYNGSDYPVLQDVSTEAISSEGLDQSLLLSVPPLATLFYQWSAK.

Aspartate 408 functions as the Nucleophile in the catalytic mechanism. Residue glutamate 461 is the Proton donor of the active site.

This sequence belongs to the glycosyl hydrolase 13 family. GlgB subfamily. Monomer.

It catalyses the reaction Transfers a segment of a (1-&gt;4)-alpha-D-glucan chain to a primary hydroxy group in a similar glucan chain.. It functions in the pathway glycan biosynthesis; glycogen biosynthesis. Catalyzes the formation of the alpha-1,6-glucosidic linkages in glycogen by scission of a 1,4-alpha-linked oligosaccharide from growing alpha-1,4-glucan chains and the subsequent attachment of the oligosaccharide to the alpha-1,6 position. This chain is 1,4-alpha-glucan branching enzyme GlgB, found in Vibrio cholerae serotype O1 (strain ATCC 39315 / El Tor Inaba N16961).